The primary structure comprises 138 residues: Protein FAM136A (138 aa).

It belongs to the FAM136 family.

This chain is Protein FAM136A (fam136a), found in Xenopus laevis (African clawed frog).